Reading from the N-terminus, the 389-residue chain is Lipid-A-disaccharide synthase (389 aa).

Belongs to the LpxB family.

The catalysed reaction is a lipid X + a UDP-2-N,3-O-bis[(3R)-3-hydroxyacyl]-alpha-D-glucosamine = a lipid A disaccharide + UDP + H(+). It participates in bacterial outer membrane biogenesis; LPS lipid A biosynthesis. Functionally, condensation of UDP-2,3-diacylglucosamine and 2,3-diacylglucosamine-1-phosphate to form lipid A disaccharide, a precursor of lipid A, a phosphorylated glycolipid that anchors the lipopolysaccharide to the outer membrane of the cell. The protein is Lipid-A-disaccharide synthase of Burkholderia cenocepacia (strain ATCC BAA-245 / DSM 16553 / LMG 16656 / NCTC 13227 / J2315 / CF5610) (Burkholderia cepacia (strain J2315)).